Here is a 303-residue protein sequence, read N- to C-terminus: Uracil phosphoribosyltransferase (303 aa).

The segment at 1 to 86 (MHIIMKTILA…RYVSSTPTDS (86 aa)) is unknown. The interval 87–303 (LSSKPLAAVY…DRLCGTSNPS (217 aa)) is UPRTase. 5-phospho-alpha-D-ribose 1-diphosphate-binding positions include Arg-170, Arg-195, and 222-230 (DPMLATGGS). Uracil is bound by residues Ile-285 and 290-292 (GDA). Residue Asp-291 participates in 5-phospho-alpha-D-ribose 1-diphosphate binding.

The protein belongs to the UPRTase family. Mg(2+) serves as cofactor.

The catalysed reaction is UMP + diphosphate = 5-phospho-alpha-D-ribose 1-diphosphate + uracil. It functions in the pathway pyrimidine metabolism; UMP biosynthesis via salvage pathway; UMP from uracil: step 1/1. With respect to regulation, allosterically activated by GTP. In terms of biological role, catalyzes the conversion of uracil and 5-phospho-alpha-D-ribose 1-diphosphate (PRPP) to UMP and diphosphate. The polypeptide is Uracil phosphoribosyltransferase (upp) (Chlamydia muridarum (strain MoPn / Nigg)).